The chain runs to 446 residues: Keratin, type I cytoskeletal 25 (446 aa).

A disordered region spans residues M1–S20. A head region spans residues M1–N74. The coil 1A stretch occupies residues E75–W110. An IF rod domain is found at E75–C390. The segment at Y111–I132 is linker 1. The segment at I133–L224 is coil 1B. A linker 12 region spans residues Q225–L247. A coil 2 region spans residues L248–D386. Positions E387–N446 are tail. Positions S394 to P413 are disordered. A compositionally biased stretch (polar residues) spans Y400–K410. S438 bears the Phosphoserine mark.

The protein belongs to the intermediate filament family. In terms of assembly, heterodimer of a type I and a type II keratin. Heterodimer with type II keratin KRT5 leading to the formation of keratin intermediate filament (KIF) network. Interacts with KRT6A to form filaments.

The protein localises to the cytoplasm. In terms of biological role, essential for the proper assembly of type I and type II keratin protein complexes and formation of keratin intermediate filaments in the inner root sheath (irs). Plays a role in the cytoskeleton organization. This is Keratin, type I cytoskeletal 25 from Rattus norvegicus (Rat).